The following is a 423-amino-acid chain: MLNPDVKTIVDAVEGSQDLFRHSLPMIASENVTSPMVRKVLSSDLGHRYAEGQVGHRFYQGCGFVDVIEGKAIELAKEIFRAPHVNVQPVSGVNCNIAAFFALADPGDKLMALAVPSGGHISHAKFSAAGIRGLKIYTHPYDNQIMNIDVDRMIKQIREIRPRVVMFGASLFLFPHPVKEAREVCDEVGASIVYDGAHVLGLIAGGQFQDPLREGADVVTGSTHKTFPGPQGGIILCKEKFAKDIDEAVFPGTVSNAHLHHKAGLAITLAEMKAFGKQYAAQIVKNSQALGAAMDDLGFNVLCKDLGYTKSHQIAVDVSKIGGGSVLASKLERANIITNKNLFPWDDVNTTDNPSGLRLGTQELTRLGMNEPEMKEVAKFIKRVAIDKEEPEKVKKDVVHFKSQYQAVKYCFDGDGAYEFSLR.

Residue 119–121 (GHI) participates in (6S)-5,6,7,8-tetrahydrofolate binding. An N6-(pyridoxal phosphate)lysine modification is found at lysine 225.

The protein belongs to the SHMT family. In terms of assembly, homodimer. Pyridoxal 5'-phosphate is required as a cofactor.

It is found in the cytoplasm. The enzyme catalyses (6R)-5,10-methylene-5,6,7,8-tetrahydrofolate + glycine + H2O = (6S)-5,6,7,8-tetrahydrofolate + L-serine. It participates in one-carbon metabolism; tetrahydrofolate interconversion. Its pathway is amino-acid biosynthesis; glycine biosynthesis; glycine from L-serine: step 1/1. Catalyzes the reversible interconversion of serine and glycine with tetrahydrofolate (THF) serving as the one-carbon carrier. Also exhibits THF-independent aldolase activity toward beta-hydroxyamino acids, producing glycine and aldehydes, via a retro-aldol mechanism. This is Serine hydroxymethyltransferase from Methanocella arvoryzae (strain DSM 22066 / NBRC 105507 / MRE50).